The following is a 132-amino-acid chain: DNA-directed RNA polymerase subunit omega (132 aa).

Belongs to the RNA polymerase subunit omega family. The RNAP catalytic core consists of 2 alpha, 1 beta, 1 beta' and 1 omega subunit. When a sigma factor is associated with the core the holoenzyme is formed, which can initiate transcription.

It carries out the reaction RNA(n) + a ribonucleoside 5'-triphosphate = RNA(n+1) + diphosphate. Its function is as follows. Promotes RNA polymerase assembly. Latches the N- and C-terminal regions of the beta' subunit thereby facilitating its interaction with the beta and alpha subunits. In Bartonella bacilliformis (strain ATCC 35685 / KC583 / Herrer 020/F12,63), this protein is DNA-directed RNA polymerase subunit omega.